A 1732-amino-acid polypeptide reads, in one-letter code: Serine/threonine-protein kinase MRCK alpha (1732 aa).

The 267-residue stretch at 77–343 (FEILKVIGRG…IEDFKKHPFF (267 aa)) folds into the Protein kinase domain. Residues 83-91 (IGRGAFGEV) and Lys106 each bind ATP. The active-site Proton acceptor is Asp201. A phosphoserine; by autocatalysis mark is found at Ser222 and Ser234. Thr240 is modified (phosphothreonine; by autocatalysis). An AGC-kinase C-terminal domain is found at 344 to 414 (SGIDWDNIRN…TSSCVLSDRS (71 aa)). Coiled coils occupy residues 437-670 (NNLA…KQKQ), 713-820 (SEIK…WEAQ), and 880-943 (LELQ…SEKG). The disordered stretch occupies residues 973–1002 (CTPAGKGRRIADSAPLPVHTPTLRKKGCPA). Residues 1012–1062 (THQFFVKSFTAPTKCHQCTSLMVGLIRQGCSCEVCGFSCHITCVNKAPTTC) form a Phorbol-ester/DAG-type zinc finger. The region spanning 1082 to 1201 (GTAYEGHVRI…WVGVLSELHK (120 aa)) is the PH domain. Ser1127 carries the post-translational modification Phosphoserine. The CNH domain maps to 1227–1499 (IKTTQAAAII…RPLNTEGSLN (273 aa)). Residue Ser1545 is modified to Phosphoserine. The region spanning 1571–1584 (ISNPTNFNHIAHMG) is the CRIB domain. The tract at residues 1592-1732 (LKDLPMNPRP…ESTDRGSWDP (141 aa)) is disordered. The span at 1604–1619 (SRTVFSGSVSIPSITK) shows a compositional bias: polar residues. Ser1611, Ser1613, Ser1629, Ser1651, Ser1664, Ser1669, Ser1693, Ser1719, and Ser1721 each carry phosphoserine. Residues 1625-1640 (GRSMSASSGLSARSSA) are compositionally biased toward low complexity. Residues 1665–1674 (PSEGSLSSGG) show a composition bias toward low complexity.

It belongs to the protein kinase superfamily. AGC Ser/Thr protein kinase family. DMPK subfamily. As to quaternary structure, homodimer and homotetramer via the coiled coil regions. Interacts tightly with GTP-bound but not GDP-bound CDC42. Forms a tripartite complex with MYO18A and LURAP1 with the latter acting as an adapter connecting CDC42BPA and MYO18A. LURAP1 binding results in activation of CDC42BPA by abolition of its negative autoregulation. Interacts with LURAP1. Interacts (via AGC-kinase C-terminal domain) with FAM89B/LRAP25 (via LRR repeat). Forms a tripartite complex with FAM89B/LRAP25 and LIMK1. The cofactor is Mg(2+). Post-translationally, proteolytically cleaved by caspases upon apoptosis induction. The cleavage at Asp-478 by CASP3 increases its kinase activity (in vitro). Highly expressed in the brain and lung and present in lower levels in all other tissues tested.

It is found in the cytoplasm. The protein localises to the cell projection. Its subcellular location is the lamellipodium. The enzyme catalyses L-seryl-[protein] + ATP = O-phospho-L-seryl-[protein] + ADP + H(+). It catalyses the reaction L-threonyl-[protein] + ATP = O-phospho-L-threonyl-[protein] + ADP + H(+). Its activity is regulated as follows. Maintained in an inactive, closed conformation by an interaction between the kinase domain and the negative autoregulatory C-terminal coiled-coil region. Agonist binding to the phorbol ester binding site disrupts this, releasing the kinase domain to allow N-terminus-mediated dimerization and kinase activation by transautophosphorylation. Inhibited by chelerythrine chloride. Its function is as follows. Serine/threonine-protein kinase which is an important downstream effector of CDC42 and plays a role in the regulation of cytoskeleton reorganization and cell migration. Regulates actin cytoskeletal reorganization via phosphorylation of PPP1R12A and MYL9/MLC2. In concert with MYO18A and LURAP1, is involved in modulating lamellar actomyosin retrograde flow that is crucial to cell protrusion and migration. Phosphorylates: PPP1R12C, LIMK1 and LIMK2. May play a role in TFRC-mediated iron uptake. In concert with FAM89B/LRAP25 mediates the targeting of LIMK1 to the lamellipodium resulting in its activation and subsequent phosphorylation of CFL1 which is important for lamellipodial F-actin regulation. Triggers the formation of an extrusion apical actin ring required for epithelial extrusion of apoptotic cells. The polypeptide is Serine/threonine-protein kinase MRCK alpha (Rattus norvegicus (Rat)).